We begin with the raw amino-acid sequence, 609 residues long: WD repeat-containing protein 1 (609 aa).

WD repeat units follow at residues 6–47 (EIKK…IRNI), 50–89 (PAIADIYTEHAHQVVVAKYAPSGFYIASGDVSGKLRIWDT), 95–137 (LLKY…LWDS), 140–178 (SVGEITGHNKVINSVDIKQTRPYRLATGSDDNCAAFFEG), 182–220 (KFKFTLSDHTRFVNCVRFSPDGNRFATASADGQIFIYDG), 226–265 (VCALGGGKAHDGGIYAISWSPDSSQLLSASGDKTAKIWDV), 272–308 (STFNMGSNVLDQQLGCLWQKDHLLSLSLSGYINYLDK), 313–353 (KPLR…YWDS), 360–410 (GFSG…KMDV), 434–476 (MKDK…LYSI), 482–520 (KSDDKTLEAKGPVTDLAYSHDGAFLAVCDANKVVTVFSV), 525–563 (VEHNVFYGHHAKVVCIAWSPDNEHFASGGMDMMVYVWTV), and 568–606 (TRIKIPDAHRLHHVSGLAWLDEHTLVTTSHDASVKEWSI).

Belongs to the WD repeat AIP1 family.

Its subcellular location is the cytoplasm. The protein localises to the cytoskeleton. Its function is as follows. Induces disassembly of actin filaments in conjunction with ADF/cofilin family proteins. Enhances cofilin-mediated actin severing. This Gallus gallus (Chicken) protein is WD repeat-containing protein 1 (WDR1).